The sequence spans 92 residues: 10 kDa late embryogenesis abundant protein (92 aa).

Residues 1 to 10 (MASQQGQQTR) show a composition bias toward polar residues. Positions 1–92 (MASQQGQQTR…GEREEEEEED (92 aa)) are disordered. 2 stretches are compositionally biased toward basic and acidic residues: residues 11-26 (KIPEQEKKDLDQRAAK) and 38-71 (KSLEAQERLAEGRSKGGQTRKDQLGTEGYKEMGK).

The protein belongs to the small hydrophilic plant seed protein family. Maximally expressed in dry seeds. Also present in mid-maturation embryos.

In terms of biological role, LEA proteins are late embryonic proteins abundant in higher plant seed embryos. They may play an essential role in seed survival and in controlling water exchanges during seed desiccation and imbibition. In Helianthus annuus (Common sunflower), this protein is 10 kDa late embryogenesis abundant protein.